A 444-amino-acid chain; its full sequence is tRNA-2-methylthio-N(6)-dimethylallyladenosine synthase (444 aa).

Residues 2 to 119 enclose the MTTase N-terminal domain; that stretch reads KKVYIKTFGC…LPDLIESRKQ (118 aa). Positions 11, 48, 82, 156, 160, and 163 each coordinate [4Fe-4S] cluster. One can recognise a Radical SAM core domain in the interval 142–374; sequence KVDGGAAFVS…NEVIEAKGYA (233 aa). The region spanning 377-440 is the TRAM domain; that stretch reads QSMVGTVQRV…PHSLAGEALT (64 aa).

It belongs to the methylthiotransferase family. MiaB subfamily. Monomer. It depends on [4Fe-4S] cluster as a cofactor.

Its subcellular location is the cytoplasm. The enzyme catalyses N(6)-dimethylallyladenosine(37) in tRNA + (sulfur carrier)-SH + AH2 + 2 S-adenosyl-L-methionine = 2-methylsulfanyl-N(6)-dimethylallyladenosine(37) in tRNA + (sulfur carrier)-H + 5'-deoxyadenosine + L-methionine + A + S-adenosyl-L-homocysteine + 2 H(+). Catalyzes the methylthiolation of N6-(dimethylallyl)adenosine (i(6)A), leading to the formation of 2-methylthio-N6-(dimethylallyl)adenosine (ms(2)i(6)A) at position 37 in tRNAs that read codons beginning with uridine. The protein is tRNA-2-methylthio-N(6)-dimethylallyladenosine synthase of Chromobacterium violaceum (strain ATCC 12472 / DSM 30191 / JCM 1249 / CCUG 213 / NBRC 12614 / NCIMB 9131 / NCTC 9757 / MK).